Here is a 254-residue protein sequence, read N- to C-terminus: MKIGVYGASGRIGKLLLEELKGGYKGLVLSSVFVRQKCEIDFSSFSHKPLVTNDLKAFVRACECVIDFSLPKGVDSLLDTLLECPKILVSGTTGLEEKTLEKMQNLALKTPLLHAHNMSIGIAILNQLAFLASLKLKDADIEIVETHHNLKKDAPSGTALSLYQTCAKARGYDEKNALTTHREGLRSKESIGVAALRGGDVAGKHTIGFYLEGEYIELSHTATNRSIFAKGALEVALWLKDKAAKKYEINEIFD.

Glycine 7–isoleucine 12 contacts NAD(+). Position 35 (arginine 35) interacts with NADP(+). NAD(+) is bound by residues glycine 91–threonine 93 and alanine 115–methionine 118. The Proton donor/acceptor role is filled by histidine 147. Residue histidine 148 coordinates (S)-2,3,4,5-tetrahydrodipicolinate. Lysine 151 acts as the Proton donor in catalysis. Position 157–158 (glycine 157–threonine 158) interacts with (S)-2,3,4,5-tetrahydrodipicolinate.

It belongs to the DapB family.

The protein localises to the cytoplasm. The enzyme catalyses (S)-2,3,4,5-tetrahydrodipicolinate + NAD(+) + H2O = (2S,4S)-4-hydroxy-2,3,4,5-tetrahydrodipicolinate + NADH + H(+). It catalyses the reaction (S)-2,3,4,5-tetrahydrodipicolinate + NADP(+) + H2O = (2S,4S)-4-hydroxy-2,3,4,5-tetrahydrodipicolinate + NADPH + H(+). Its pathway is amino-acid biosynthesis; L-lysine biosynthesis via DAP pathway; (S)-tetrahydrodipicolinate from L-aspartate: step 4/4. Its function is as follows. Catalyzes the conversion of 4-hydroxy-tetrahydrodipicolinate (HTPA) to tetrahydrodipicolinate. In Helicobacter acinonychis (strain Sheeba), this protein is 4-hydroxy-tetrahydrodipicolinate reductase.